The sequence spans 101 residues: Small ribosomal subunit protein uS14 (101 aa).

The tract at residues 1–26 is disordered; that stretch reads MAKVSSIQKNKSRQKKSQSLHNKRSE. A compositionally biased stretch (basic residues) spans 10 to 22; the sequence is NKSRQKKSQSLHN.

It belongs to the universal ribosomal protein uS14 family. Part of the 30S ribosomal subunit. Contacts proteins S3 and S10.

Binds 16S rRNA, required for the assembly of 30S particles and may also be responsible for determining the conformation of the 16S rRNA at the A site. This Rickettsia prowazekii (strain Madrid E) protein is Small ribosomal subunit protein uS14.